Reading from the N-terminus, the 311-residue chain is Methionyl-tRNA formyltransferase (311 aa).

Residue 109–112 (SLLP) participates in (6S)-5,6,7,8-tetrahydrofolate binding.

Belongs to the Fmt family.

The enzyme catalyses L-methionyl-tRNA(fMet) + (6R)-10-formyltetrahydrofolate = N-formyl-L-methionyl-tRNA(fMet) + (6S)-5,6,7,8-tetrahydrofolate + H(+). Functionally, attaches a formyl group to the free amino group of methionyl-tRNA(fMet). The formyl group appears to play a dual role in the initiator identity of N-formylmethionyl-tRNA by promoting its recognition by IF2 and preventing the misappropriation of this tRNA by the elongation apparatus. The sequence is that of Methionyl-tRNA formyltransferase from Staphylococcus aureus (strain JH1).